Here is a 591-residue protein sequence, read N- to C-terminus: Inactive metallocarboxypeptidase ECM14 (591 aa).

The signal sequence occupies residues 1 to 21 (MRLFAHLAVLAILACAVPITA). Residues 22–175 (IPSFLSNSYP…QTIYESYPSS (154 aa)) constitute a propeptide that is removed on maturation. In terms of domain architecture, Peptidase M14 spans 203 to 523 (DYQPFSVIVP…NAVMVLGRFL (321 aa)). The Zn(2+) site is built by H265 and E268. Residues 265-268 (HARE), R323, and 340-341 (DR) each bind substrate. C334 and C357 are oxidised to a cystine. N-linked (GlcNAc...) asparagine glycosylation is found at N350, N381, and N386. H397 is a Zn(2+) binding site. 398-399 (SY) contacts substrate. The disordered stretch occupies residues 533 to 591 (DWEDESQRPKAGEDDIPSDNELDENDDSWIPYDYRNHDDQNEGEGYDNDEWGFRRRRKR). 2 stretches are compositionally biased toward acidic residues: residues 546–559 (DDIP…ENDD) and 573–582 (NEGEGYDNDE).

It belongs to the peptidase M14 family. Zn(2+) is required as a cofactor.

It is found in the vacuole. The protein localises to the secreted. In terms of biological role, inactive carboxypeptidase that may play a role in cell wall organization and biogenesis. This is Inactive metallocarboxypeptidase ECM14 (ECM14) from Paracoccidioides brasiliensis (strain Pb03).